Reading from the N-terminus, the 477-residue chain is Glutamate--tRNA ligase (477 aa).

Residues 18–28 carry the 'HIGH' region motif; sequence PSPTGFIHLGN. Residues 128–138 are compositionally biased toward basic and acidic residues; sequence PRYDGSWRPEP. Residues 128 to 151 are disordered; that stretch reads PRYDGSWRPEPGKTLPPVPAGMSP. The short motif at 250 to 254 is the 'KMSKS' region element; it reads KLSKR. Lysine 253 is an ATP binding site.

It belongs to the class-I aminoacyl-tRNA synthetase family. Glutamate--tRNA ligase type 1 subfamily. In terms of assembly, monomer.

The protein localises to the cytoplasm. The enzyme catalyses tRNA(Glu) + L-glutamate + ATP = L-glutamyl-tRNA(Glu) + AMP + diphosphate. Functionally, catalyzes the attachment of glutamate to tRNA(Glu) in a two-step reaction: glutamate is first activated by ATP to form Glu-AMP and then transferred to the acceptor end of tRNA(Glu). The protein is Glutamate--tRNA ligase of Verminephrobacter eiseniae (strain EF01-2).